The primary structure comprises 319 residues: Red chlorophyll catabolite reductase, chloroplastic (319 aa).

Residues 1-39 (MAMIFCNTLYSSSSPSYLSPLTSKPSRFSKNLRPRAQFQ) constitute a chloroplast transit peptide. Red chlorophyll catabolite contacts are provided by residues Glu154 and 207–209 (YVS). Residues 255 to 286 (LERCVKEEEEKIVVGEEERMELERRDKSFRRK) are a coiled coil. Asp291 is a red chlorophyll catabolite binding site.

In terms of assembly, homodimer. Interacts with HCAR. Interacts with SGR1, NYC1, NOL, PPH, PAO and the LHCII complex. Part of a SGR1-CCE-LHCII complex, which acts in chlorophyll breakdown. Expressed in all tissues tested, including roots.

Its subcellular location is the plastid. It is found in the chloroplast stroma. It localises to the chloroplast thylakoid membrane. It catalyses the reaction primary fluorescent chlorophyll catabolite + 2 oxidized [2Fe-2S]-[ferredoxin] = red chlorophyll catabolite + 2 reduced [2Fe-2S]-[ferredoxin] + 3 H(+). Its pathway is porphyrin-containing compound metabolism; chlorophyll degradation. In terms of biological role, catalyzes the key reaction of chlorophyll catabolism, porphyrin macrocycle cleavage of pheophorbide a (pheide a) to a primary fluorescent catabolite (pFCC). Works in a two-step reaction with pheophorbide a oxygenase (PaO) by reducing the C20/C1 double bond of the intermediate, RCC. Belongs to the chlorophyll catabolic enzymes (CCEs). The protein is Red chlorophyll catabolite reductase, chloroplastic of Arabidopsis thaliana (Mouse-ear cress).